The following is an 856-amino-acid chain: MSVDKSKALVLWLDEVTIEDIPIAGGKNASLGEMIRNLSPLGVKIPYGYVVTANAYYYFLDYNNLRDKIRKILEGLNTDDLKDLQRRGHEVRELIRGGTFPPDLEEAIKDYYNKLSEKYKTHAVDVAVRSSATAEDLPDASFAGQQETYLNVVGAENVLVAIKNCFASLFTDRAIVYRERFGFDHFKVGIAVGVQKMVRSDMGASGVMFTLDTETGFKDVVVINAAYGLGELLVRGEVTPDEYIVFKPTLMKGYSAIIEKKLGRKDRKMIYGTGDERVKIVNVPKEDQKKFALNDDEILQLAKWGVLIEEHYSKKNGRWTPMDIEWAKDGILNELFVVQARPETVHSRKKENVVKIYKIKTPEEERKNRVIVKGIAVGDKIATGKARVLFDLKEADQFQEGEILVTDITDPDWEPVMKKAAAIVTNRGGRTSHAAIVARELGIPAVVGTGNATEKIKTGEEITVSCAEGETGYVYEGKIDYEVEEINLENIPKPKTKIMMNIGNPESAFRYASLPNDGVGLAREEFIIANYIKIHPLALLHYEDLKELYEKLERENLIDEKGFVQFKLIYHYANGRLANKLAKGKDKLRVNLRKILQDIENLTFGYEDKATYYIKKLSYGIAKIAAAFYPNPVIVRFSDFKSNEYANLIGGILFEPEEENPMLGWRGASRYYSDVFKEAFGMECKAIIRVRNKMGLTNTKVMIPFCRTPEEGEKVLQVMEEYGLRKGENGLEVYVMAELPSNIVLADRYAQIFDGFSIGSNDLTQLTLGLDRDSELVAHLYDERNEAVKRLIAQLIKTAKEYGRKVGICGQAPSDFPEFAQFLVEQGIDSISLNPDSVLKTMLAVVEMEKKLGVLK.

Histidine 433 functions as the Tele-phosphohistidine intermediate in the catalytic mechanism. Arginine 523, arginine 636, glutamate 738, glycine 759, serine 760, asparagine 761, and aspartate 762 together coordinate substrate. Glutamate 738 lines the Mg(2+) pocket. Aspartate 762 serves as a coordination point for Mg(2+). Catalysis depends on cysteine 809, which acts as the Proton donor.

This sequence belongs to the PEP-utilizing enzyme family. Requires Mg(2+) as cofactor.

It catalyses the reaction pyruvate + ATP + H2O = phosphoenolpyruvate + AMP + phosphate + 2 H(+). It participates in carbohydrate biosynthesis; gluconeogenesis. Catalyzes the phosphorylation of pyruvate to phosphoenolpyruvate. This is Phosphoenolpyruvate synthase (ppsA) from Aquifex aeolicus (strain VF5).